The sequence spans 283 residues: Protein/nucleic acid deglycase HchA (283 aa).

Zn(2+) contacts are provided by His86, Glu91, and His123. Residue Cys185 is the Nucleophile of the active site.

The protein belongs to the peptidase C56 family. HchA subfamily. Homodimer.

The protein localises to the cytoplasm. The enzyme catalyses N(omega)-(1-hydroxy-2-oxopropyl)-L-arginyl-[protein] + H2O = lactate + L-arginyl-[protein] + H(+). The catalysed reaction is N(6)-(1-hydroxy-2-oxopropyl)-L-lysyl-[protein] + H2O = lactate + L-lysyl-[protein] + H(+). It carries out the reaction S-(1-hydroxy-2-oxopropyl)-L-cysteinyl-[protein] + H2O = lactate + L-cysteinyl-[protein] + H(+). It catalyses the reaction N(omega)-(1-hydroxy-2-oxoethyl)-L-arginyl-[protein] + H2O = L-arginyl-[protein] + glycolate + H(+). The enzyme catalyses N(6)-(1-hydroxy-2-oxoethyl)-L-lysyl-[protein] + H2O = glycolate + L-lysyl-[protein] + H(+). The catalysed reaction is S-(1-hydroxy-2-oxoethyl)-L-cysteinyl-[protein] + H2O = glycolate + L-cysteinyl-[protein] + H(+). It carries out the reaction N(2)-(1-hydroxy-2-oxopropyl)-dGTP + H2O = lactate + dGTP + H(+). It catalyses the reaction N(2)-(1-hydroxy-2-oxopropyl)-GTP + H2O = lactate + GTP + H(+). The enzyme catalyses N(2)-(1-hydroxy-2-oxopropyl)-GDP + H2O = lactate + GDP + H(+). The catalysed reaction is N(2)-(1-hydroxy-2-oxopropyl)-GMP + H2O = lactate + GMP + H(+). It carries out the reaction N(2)-(1-hydroxy-2-oxoethyl)-dGTP + H2O = dGTP + glycolate + H(+). It catalyses the reaction N(2)-(1-hydroxy-2-oxoethyl)-GTP + H2O = glycolate + GTP + H(+). The enzyme catalyses N(2)-(1-hydroxy-2-oxoethyl)-GDP + H2O = glycolate + GDP + H(+). The catalysed reaction is N(2)-(1-hydroxy-2-oxoethyl)-GMP + H2O = glycolate + GMP + H(+). It carries out the reaction an N(2)-(1-hydroxy-2-oxopropyl)-guanosine in RNA + H2O = a guanosine in RNA + lactate + H(+). It catalyses the reaction an N(2)-(1-hydroxy-2-oxopropyl)-2'-deoxyguanosine in DNA + H2O = a 2'-deoxyguanosine in DNA + lactate + H(+). The enzyme catalyses an N(2)-(1-hydroxy-2-oxoethyl)-guanosine in RNA + H2O = a guanosine in RNA + glycolate + H(+). The catalysed reaction is an N(2)-(1-hydroxy-2-oxoethyl)-2'-deoxyguanosine in DNA + H2O = a 2'-deoxyguanosine in DNA + glycolate + H(+). Protein and nucleotide deglycase that catalyzes the deglycation of the Maillard adducts formed between amino groups of proteins or nucleotides and reactive carbonyl groups of glyoxals. Thus, functions as a protein deglycase that repairs methylglyoxal- and glyoxal-glycated proteins, and releases repaired proteins and lactate or glycolate, respectively. Deglycates cysteine, arginine and lysine residues in proteins, and thus reactivates these proteins by reversing glycation by glyoxals. Acts on early glycation intermediates (hemithioacetals and aminocarbinols), preventing the formation of Schiff bases and advanced glycation endproducts (AGE). Also functions as a nucleotide deglycase able to repair glycated guanine in the free nucleotide pool (GTP, GDP, GMP, dGTP) and in DNA and RNA. Is thus involved in a major nucleotide repair system named guanine glycation repair (GG repair), dedicated to reversing methylglyoxal and glyoxal damage via nucleotide sanitization and direct nucleic acid repair. Plays an important role in protecting cells from carbonyl stress. This Escherichia coli O157:H7 protein is Protein/nucleic acid deglycase HchA.